The primary structure comprises 207 residues: Probable GTP-binding protein EngB (207 aa).

One can recognise an EngB-type G domain in the interval 24–199 (GGYEVAFAGR…RAIVGAWLGL (176 aa)). Residues 32-39 (GRSNAGKS), 59-63 (GRTQQ), 77-80 (DLPG), 144-147 (TKAD), and 178-180 (YSG) each bind GTP. Residues S39 and T61 each coordinate Mg(2+).

Belongs to the TRAFAC class TrmE-Era-EngA-EngB-Septin-like GTPase superfamily. EngB GTPase family. Requires Mg(2+) as cofactor.

Functionally, necessary for normal cell division and for the maintenance of normal septation. The protein is Probable GTP-binding protein EngB of Xanthomonas euvesicatoria pv. vesicatoria (strain 85-10) (Xanthomonas campestris pv. vesicatoria).